We begin with the raw amino-acid sequence, 419 residues long: Gamma-glutamyl phosphate reductase (419 aa).

It belongs to the gamma-glutamyl phosphate reductase family.

Its subcellular location is the cytoplasm. The enzyme catalyses L-glutamate 5-semialdehyde + phosphate + NADP(+) = L-glutamyl 5-phosphate + NADPH + H(+). The protein operates within amino-acid biosynthesis; L-proline biosynthesis; L-glutamate 5-semialdehyde from L-glutamate: step 2/2. Catalyzes the NADPH-dependent reduction of L-glutamate 5-phosphate into L-glutamate 5-semialdehyde and phosphate. The product spontaneously undergoes cyclization to form 1-pyrroline-5-carboxylate. The chain is Gamma-glutamyl phosphate reductase from Azoarcus sp. (strain BH72).